A 640-amino-acid chain; its full sequence is Chaperone protein DnaK (640 aa).

Phosphothreonine; by autocatalysis is present on threonine 196. Disordered stretches follow at residues 487-526 and 593-640; these read GKEQ…KEEI and SHLY…GNDK. The span at 501-526 shows a compositional bias: basic and acidic residues; sequence TDAEISKMKEDAKEHAAEDQKRKEEI. The segment covering 595–613 has biased composition (polar residues); it reads LYQSQGPESSQPETAAQSD. Residues 630 to 640 are compositionally biased toward acidic residues; it reads AEYEVIDGNDK.

The protein belongs to the heat shock protein 70 family.

Functionally, acts as a chaperone. This is Chaperone protein DnaK from Pelodictyon phaeoclathratiforme (strain DSM 5477 / BU-1).